Consider the following 169-residue polypeptide: Macrocypin-1a (169 aa).

Belongs to the protease inhibitor I85 family.

Functionally, inhibits papain and cysteine cathepsin endopeptidases, and also inhibits cathepsins B and H, which exhibit both exopeptidase and endopeptidase activities. This Macrolepiota procera (Parasol mushroom) protein is Macrocypin-1a.